A 370-amino-acid chain; its full sequence is UDP-3-O-acylglucosamine N-acyltransferase (370 aa).

The Proton acceptor role is filled by His252. A disordered region spans residues 348–370; sequence NAAAEKRDGPAPNAASKATGDKV.

Belongs to the transferase hexapeptide repeat family. LpxD subfamily. In terms of assembly, homotrimer.

The catalysed reaction is a UDP-3-O-[(3R)-3-hydroxyacyl]-alpha-D-glucosamine + a (3R)-hydroxyacyl-[ACP] = a UDP-2-N,3-O-bis[(3R)-3-hydroxyacyl]-alpha-D-glucosamine + holo-[ACP] + H(+). It functions in the pathway bacterial outer membrane biogenesis; LPS lipid A biosynthesis. In terms of biological role, catalyzes the N-acylation of UDP-3-O-acylglucosamine using 3-hydroxyacyl-ACP as the acyl donor. Is involved in the biosynthesis of lipid A, a phosphorylated glycolipid that anchors the lipopolysaccharide to the outer membrane of the cell. The sequence is that of UDP-3-O-acylglucosamine N-acyltransferase from Paraburkholderia phytofirmans (strain DSM 17436 / LMG 22146 / PsJN) (Burkholderia phytofirmans).